The primary structure comprises 482 residues: Zinc finger protein 385B (482 aa).

The tract at residues 1–105 is required for induction of apoptosis; sequence MNMATFLRGF…TGSACHTTTL (105 aa). 2 consecutive Matrin-type zinc fingers follow at residues 34–64 and 169–199; these read SFCE…RVKQ and ISCN…KVKA. Disordered stretches follow at residues 54–75, 189–259, and 268–287; these read DGKS…PPVQ, KGSK…SFLL, and LGAI…SVAE. The interaction with p53/TP53 stretch occupies residues 106–482; sequence PALVRTPTLM…TPASILFAPY (377 aa). Residues 231–240 are compositionally biased toward basic and acidic residues; sequence SSDKSEDKGK. Residues 294 to 328 form a Matrin-type 3 zinc finger; the sequence is KKLLYCSLCKVAVNSLSQLEAHNTGSKHKTMVEAR. 2 disordered regions span residues 331-352 and 378-397; these read AGPI…GSKG and HISS…KPKY. A Matrin-type 4 zinc finger spans residues 360–390; sequence FHCEICDVHVNSEIQLKQHISSRRHKDRVAG.

In terms of assembly, interacts with p53/TP53; the interaction is direct.

It is found in the nucleus. Functionally, may play a role in p53/TP53-mediated apoptosis. The polypeptide is Zinc finger protein 385B (Znf385b) (Mus musculus (Mouse)).